The following is a 501-amino-acid chain: MSATTRTPATPGTPGTPGSLAMEVARVQNSALAEFKKPTAMVRHKNKPKILTEEKYIEEMSKIIQRDFFPDLERLRAQNDYLDAESRRDFVQMAEIRERYSLGRISGTGRSTSRRNNAMSPATFETPVSQAKCSNTPLPNSRATDTPFSTDGSEKSDAEGRDTTAKLSLDAFLQKYTSEDNQSFQEIIETAEAKLRQKYAVLYNHEKLSAEQLQRALMLPSIETQFEEPDPLRKIETWNYTNMNSIMYVPDGVEYTEEERVQLAERKQSIQHNATRLPDEAKHREMDTKKLNDEVPQNGAGGATATPKVRGFDLLRSPSPRPGEAFSPIMTWGEIDGTPFRLDGGDTPLRPTQGPSFRINENSRRENIAIALAERVSERMRNQKQMALDTARRNIGSPLIRTNMERLASMSPAAQLLATGKLGIRGTPRLRHTPSPMSGRKRKVTPGVVRSTNTPILGEPKPKQQAKISTPAKNVTIDTGSTLTDDLLKIPTKRRTAADFF.

2 stretches are compositionally biased toward low complexity: residues Met-1–Gly-18 and Ile-105–Arg-115. 2 disordered regions span residues Met-1–Leu-20 and Ile-105–Thr-163. Residues Thr-126–Asp-151 are compositionally biased toward polar residues. Over residues Gly-152 to Thr-163 the composition is skewed to basic and acidic residues. 2 positions are modified to phosphoserine: Ser-409 and Ser-411. The segment at Arg-425–Pro-471 is disordered.

Belongs to the ESS2 family.

Its subcellular location is the nucleus. The protein is Splicing factor ESS-2 homolog (Es2) of Drosophila melanogaster (Fruit fly).